Consider the following 350-residue polypeptide: Biotin synthase (350 aa).

The Radical SAM core domain maps to 54–278 (REIQLSTLLS…TMPQSYVRLS (225 aa)). [4Fe-4S] cluster contacts are provided by cysteine 69, cysteine 73, and cysteine 76. 4 residues coordinate [2Fe-2S] cluster: cysteine 113, cysteine 144, cysteine 204, and arginine 276.

This sequence belongs to the radical SAM superfamily. Biotin synthase family. In terms of assembly, homodimer. It depends on [4Fe-4S] cluster as a cofactor. [2Fe-2S] cluster serves as cofactor.

The catalysed reaction is (4R,5S)-dethiobiotin + (sulfur carrier)-SH + 2 reduced [2Fe-2S]-[ferredoxin] + 2 S-adenosyl-L-methionine = (sulfur carrier)-H + biotin + 2 5'-deoxyadenosine + 2 L-methionine + 2 oxidized [2Fe-2S]-[ferredoxin]. It participates in cofactor biosynthesis; biotin biosynthesis; biotin from 7,8-diaminononanoate: step 2/2. Its function is as follows. Catalyzes the conversion of dethiobiotin (DTB) to biotin by the insertion of a sulfur atom into dethiobiotin via a radical-based mechanism. The chain is Biotin synthase from Neisseria meningitidis serogroup B (strain ATCC BAA-335 / MC58).